A 128-amino-acid chain; its full sequence is uncharacterized protein (128 aa).

This sequence belongs to the HesB/IscA family.

This is an uncharacterized protein from Buchnera aphidicola subsp. Baizongia pistaciae (strain Bp).